Consider the following 211-residue polypeptide: 2,3-bisphosphoglycerate-dependent phosphoglycerate mutase (211 aa).

Substrate-binding positions include 9–16 (RHGQSDWN), 22–23 (TG), arginine 61, 88–91 (ERDY), lysine 99, 115–116 (RR), and 159–160 (GN). The Tele-phosphohistidine intermediate role is filled by histidine 10. Glutamate 88 acts as the Proton donor/acceptor in catalysis.

This sequence belongs to the phosphoglycerate mutase family. BPG-dependent PGAM subfamily. As to quaternary structure, homodimer.

The enzyme catalyses (2R)-2-phosphoglycerate = (2R)-3-phosphoglycerate. The protein operates within carbohydrate degradation; glycolysis; pyruvate from D-glyceraldehyde 3-phosphate: step 3/5. Functionally, catalyzes the interconversion of 2-phosphoglycerate and 3-phosphoglycerate. The sequence is that of 2,3-bisphosphoglycerate-dependent phosphoglycerate mutase from Rhizobium johnstonii (strain DSM 114642 / LMG 32736 / 3841) (Rhizobium leguminosarum bv. viciae).